We begin with the raw amino-acid sequence, 593 residues long: Dolichyl-phosphooligosaccharide-protein glycotransferase 2 (593 aa).

The Cytoplasmic portion of the chain corresponds to 1–12 (MTPVGMDRKSLS). A helical transmembrane segment spans residues 13–33 (LLILIVLLGLCIRLQNFGEIF). At 34-98 (DSRIYYYGYD…GLFLGFWASE (65 aa)) the chain is on the extracellular side. The short motif at 41–43 (GYD) is the DXD motif 1 element. Aspartate 43 contacts Mn(2+). A helical membrane pass occupies residues 99 to 119 (IFAVVFPVIIGVLCIVLVYLI). Residues 120-128 (SLEVLRNEK) lie on the Cytoplasmic side of the membrane. The chain crosses the membrane as a helical span at residues 129-149 (FALISAFIFSVCPVTVWKSLL). Residues 150-154 (GKADH) are Extracellular-facing. Residue aspartate 153 participates in Mn(2+) binding. Residues 153-155 (DHH) carry the DXD motif 2 motif. A glycophospholipid is bound at residue histidine 154. Histidine 155 provides a ligand contact to Mn(2+). Residues 155 to 175 (HIWVVFLLLLSIWLVTKPGLL) form a helical membrane-spanning segment. The Cytoplasmic segment spans residues 176–180 (KLLSG). A helical membrane pass occupies residues 181–201 (IPMLLMALSWLGAPIYAALLA). Residues 202-229 (VSSLFQFNEKEVRIVGISNLIPVLSSIQ) are Extracellular-facing. The chain crosses the membrane as a helical span at residues 230–250 (NLFLGFSFLAIAVFLLVGSFV). Over 251-265 (KRFERRFRYAIVYYL) the chain is Cytoplasmic. The chain crosses the membrane as a helical span at residues 266–286 (CICSVALLSAYLMPVGWLGFV). Residues 287-310 (KSGISYVLGTDIYLPTIREARSFQ) lie on the Extracellular side of the membrane. Residues 302–305 (TIRE) carry the TIXE motif motif. Residues 311 to 331 (ILGVISSAGYLFFVLAIPALF) form a helical membrane-spanning segment. Methionine 332 is a topological domain (cytoplasmic). A helical membrane pass occupies residues 333 to 353 (LRNGFLKVFFVLSFLISILQL). Residue arginine 354 is a topological domain, extracellular. A glycophospholipid is bound at residue arginine 354. A helical transmembrane segment spans residues 355–375 (FVEVLAFPVAILASYTICQIL). Topologically, residues 376–411 (ERVDYPVFRKEEEGESKRRGRKEKKKAVEIRKKDHA) are cytoplasmic. A helical transmembrane segment spans residues 412–432 (TVIAFLLFLALPCFANSLAPV). Residues 433–593 (EMTMDWKEAL…FGTVKIFEVK (161 aa)) lie on the Extracellular side of the membrane. The interacts with target acceptor peptide in protein substrate stretch occupies residues 468 to 470 (WWD). The WWDYG motif motif lies at 468–472 (WWDYG). The DKi motif motif lies at 524–539 (ELTVKPETNKTKFIPI).

The protein belongs to the STT3 family. Mn(2+) serves as cofactor. The cofactor is Mg(2+). It depends on Zn(2+) as a cofactor.

The protein resides in the cell membrane. It catalyses the reaction an archaeal dolichyl phosphooligosaccharide + [protein]-L-asparagine = an archaeal dolichyl phosphate + a glycoprotein with the oligosaccharide chain attached by N-beta-D-glycosyl linkage to a protein L-asparagine.. It participates in protein modification; protein glycosylation. In terms of biological role, oligosaccharyl transferase (OST) that catalyzes the initial transfer of a defined glycan (a GalNAc-linked heptasaccharide composed of 4 Hex, 3 dHex and a sulfate for A.fulgidus AglB-S) from the lipid carrier dolichol-monophosphate to an asparagine residue within an Asn-X-Ser/Thr consensus motif in nascent polypeptide chains, the first step in protein N-glycosylation. This is Dolichyl-phosphooligosaccharide-protein glycotransferase 2 (aglB2) from Archaeoglobus fulgidus (strain ATCC 49558 / DSM 4304 / JCM 9628 / NBRC 100126 / VC-16).